Here is a 1250-residue protein sequence, read N- to C-terminus: Probable autotransporter YfaL (1250 aa).

The N-terminal stretch at 1–28 (MRIIFLRKEYLSLLPSMIASLFSANGVA) is a signal peptide. The disordered stretch occupies residues 914-951 (RSQEVTPPSPPDPDPTPDPDPTPDPDPTPDPEPTPAYQ). Repeat 1 spans residues 919-920 (TP). Residues 919–948 (TPPSPPDPDPTPDPDPTPDPDPTPDPEPTP) form a 15 X 2 AA approximate tandem repeats of [DTPE]-P region. The stretch at 921-922 (PS) is one 2; approximate repeat. Residues 923–924 (PP) form repeat 3. Residues 925 to 926 (DP) form a 4; approximate repeat. 11 repeat units span residues 927–928 (DP), 929–930 (TP), 931–932 (DP), 933–934 (DP), 935–936 (TP), 937–938 (DP), 939–940 (DP), 941–942 (TP), 943–944 (DP), 945–946 (EP), and 947–948 (TP). Residues 928–942 (PTPDPDPTPDPDPTP) are compositionally biased toward acidic residues. The Autotransporter domain occupies 980-1250 (AGGDGQTLNL…AGFLSMTVKW (271 aa)).

In terms of processing, an approximately 170 kDa protein is detected in the outer membrane, while a C-terminal 55 kDa fragment is detected in whole cells. The full-length putative autotransporter may be cleaved to release the mature protein from the outer membrane; Pefabloc SC, a Ser-Thr protease inhibitor prevents the appearance of the 55 kDa C--terminal fragment.

It is found in the periplasm. It localises to the secreted. The protein resides in the cell surface. The protein localises to the cell outer membrane. Probably an autotransporter. Upon overexpression shows increased adherence to polyvinyl chloride (PVC) plates, increased mature biofilm formation. The protein is Probable autotransporter YfaL (yfaL) of Escherichia coli (strain K12).